The primary structure comprises 379 residues: RNA-splicing ligase RtcB2 (379 aa).

Mn(2+) is bound by residues Asp-74, Cys-77, His-137, His-168, and His-239. GMP is bound at residue 136-140 (NHFVE). Residues 239-240 (HN), Ser-277, 294-297 (HGAG), and Lys-372 contribute to the GMP site. Residue His-294 is the GMP-histidine intermediate of the active site.

The protein belongs to the RtcB family. RtcB2 subfamily. Mn(2+) is required as a cofactor.

The catalysed reaction is a 3'-end 3'-phospho-ribonucleotide-RNA + a 5'-end dephospho-ribonucleoside-RNA + GTP = a ribonucleotidyl-ribonucleotide-RNA + GMP + diphosphate. GTP-dependent RNA ligase involved in rRNA repair. Repairs damaged 16S rRNA in 30S subunits that has been cleaved between adenine-1493 and guanosine-1494 (E.coli nubering). This specific cleavage is inflicted by CdiA (ECL_04451) or by colicin E3-type (ColE3) proteins. Poorly repairs damaged rRNA in the 70S ribosome; addition of release factor PrfH improves repair about 3-fold in vitro, probably because PrfH hydrolyzes the nascent chain allowing ribosomal subunit dissociation. In vivo the PrfH-RtcB2 pair restores growth in the presence of ribotoxins that specifically create this damage. Does not repair damaged tRNA (tested with tRNA(Asp) and tRNA(Arg)). This Escherichia coli (strain ATCC 25922 / DSM 1103 / LMG 8223 / NCIMB 12210 / NCTC 12241 / WDCM 00013 / Seattle 1946) protein is RNA-splicing ligase RtcB2.